A 520-amino-acid polypeptide reads, in one-letter code: Sensory neuron membrane protein 2 (520 aa).

Residues M1–K7 lie on the Cytoplasmic side of the membrane. Residues I8–F28 traverse the membrane as a helical segment. Residues Q29–E468 lie on the Extracellular side of the membrane. N-linked (GlcNAc...) asparagine glycans are attached at residues N44, N67, N104, N228, N271, N313, and N342. Disulfide bonds link C267–C337, C298–C361, and C339–C350. A helical transmembrane segment spans residues V469–V489. The Cytoplasmic portion of the chain corresponds to A490–N520.

It belongs to the CD36 family. In terms of tissue distribution, localizes to cells surrounding the sensory neurons in the antenna. Associate in a ratio of 2:1 with the neurons expressing the other subtype SNMP1.

The protein localises to the cell membrane. Its function is as follows. Plays an olfactory role that is not restricted to pheromone sensitivity. May play a role in the elimination of lipophilic components from the sensillum lymph. In Heliothis virescens (Tobacco budworm moth), this protein is Sensory neuron membrane protein 2.